Here is a 153-residue protein sequence, read N- to C-terminus: Protein Smg homolog (153 aa).

This sequence belongs to the Smg family.

This Neisseria meningitidis serogroup B (strain ATCC BAA-335 / MC58) protein is Protein Smg homolog.